We begin with the raw amino-acid sequence, 158 residues long: Crossover junction endodeoxyribonuclease RuvC (158 aa).

Residues aspartate 7, glutamate 67, and aspartate 140 contribute to the active site. Positions 7, 67, and 140 each coordinate Mg(2+).

The protein belongs to the RuvC family. Homodimer which binds Holliday junction (HJ) DNA. The HJ becomes 2-fold symmetrical on binding to RuvC with unstacked arms; it has a different conformation from HJ DNA in complex with RuvA. In the full resolvosome a probable DNA-RuvA(4)-RuvB(12)-RuvC(2) complex forms which resolves the HJ. Requires Mg(2+) as cofactor.

Its subcellular location is the cytoplasm. It catalyses the reaction Endonucleolytic cleavage at a junction such as a reciprocal single-stranded crossover between two homologous DNA duplexes (Holliday junction).. Its function is as follows. The RuvA-RuvB-RuvC complex processes Holliday junction (HJ) DNA during genetic recombination and DNA repair. Endonuclease that resolves HJ intermediates. Cleaves cruciform DNA by making single-stranded nicks across the HJ at symmetrical positions within the homologous arms, yielding a 5'-phosphate and a 3'-hydroxyl group; requires a central core of homology in the junction. The consensus cleavage sequence is 5'-(A/T)TT(C/G)-3'. Cleavage occurs on the 3'-side of the TT dinucleotide at the point of strand exchange. HJ branch migration catalyzed by RuvA-RuvB allows RuvC to scan DNA until it finds its consensus sequence, where it cleaves and resolves the cruciform DNA. The polypeptide is Crossover junction endodeoxyribonuclease RuvC (Dictyoglomus thermophilum (strain ATCC 35947 / DSM 3960 / H-6-12)).